Here is a 257-residue protein sequence, read N- to C-terminus: NAD kinase (257 aa).

The active-site Proton acceptor is D46. NAD(+) is bound by residues D46–G47, H51, N116–E117, D146, A154, T157–S162, and Q218.

This sequence belongs to the NAD kinase family. A divalent metal cation is required as a cofactor.

It is found in the cytoplasm. It carries out the reaction NAD(+) + ATP = ADP + NADP(+) + H(+). Involved in the regulation of the intracellular balance of NAD and NADP, and is a key enzyme in the biosynthesis of NADP. Catalyzes specifically the phosphorylation on 2'-hydroxyl of the adenosine moiety of NAD to yield NADP. The chain is NAD kinase from Rhizobium meliloti (strain 1021) (Ensifer meliloti).